The following is a 152-amino-acid chain: MAKSKNHTTHNQSRKWHRNGIKKPRSQRYESLKGVDPKFLRNMRFAKKHNKKGLKKMQANNAKAMSARAEAVKALVKPKEIKPKMPTGGSRKLSRLAYIAHPKLGKRARARIAKGLRLCRPKSQAKASTKAKPPAAAAPAAKGAQAPTKAPE.

Positions 1 to 26 are enriched in basic residues; it reads MAKSKNHTTHNQSRKWHRNGIKKPRS. The disordered stretch occupies residues 1 to 32; that stretch reads MAKSKNHTTHNQSRKWHRNGIKKPRSQRYESL. Lysine 5 is modified (N6-methyllysine). Serine 31 bears the Phosphoserine mark. Residue lysine 33 is modified to N6-acetyllysine. Residues 119-152 form a disordered region; sequence CRPKSQAKASTKAKPPAAAAPAAKGAQAPTKAPE. Residues 121 to 152 show a composition bias toward low complexity; that stretch reads PKSQAKASTKAKPPAAAAPAAKGAQAPTKAPE.

It belongs to the eukaryotic ribosomal protein eL29 family. As to quaternary structure, component of the large ribosomal subunit.

Its subcellular location is the cytoplasm. Its function is as follows. Component of the large ribosomal subunit. The ribosome is a large ribonucleoprotein complex responsible for the synthesis of proteins in the cell. This chain is Large ribosomal subunit protein eL29 (RPL29), found in Bos taurus (Bovine).